A 27-amino-acid chain; its full sequence is Augerpeptide hhe6.2 (27 aa).

3 disulfides stabilise this stretch: cysteine 4-cysteine 13, cysteine 8-cysteine 20, and cysteine 12-cysteine 27.

Expressed by the venom duct.

It is found in the secreted. The chain is Augerpeptide hhe6.2 from Hastula hectica (Sea snail).